The sequence spans 615 residues: Erythritol-mannosyl-transferase 1 (615 aa).

The interval 366–387 (RTPNNTGASTPTAPISSPDFEE) is disordered. Residues 367–380 (TPNNTGASTPTAPI) show a composition bias toward polar residues.

The protein belongs to the UDP-glycosyltransferase family.

The protein resides in the vacuole membrane. Its pathway is secondary metabolite biosynthesis. In terms of biological role, erythritol-mannosyl-transferase; part of the gene cluster that mediates the biosynthesis of mannosylerythritol lipids (MELs), surface-active substances that enhance the availability of water-insoluble substrates. Mannosylerythritol lipid production is responsible for hemolytic activity of Ustilago maydis. Depending on the number of acetyl groups, mannosylerythritol lipids can be differentiated into MEL A (fully acetylated), MEL B and MEL C (monoacetylated at R-6 and R-4, respectively), and the fully deacetylated MEL D. The first step in the pathway is the generation of mannosylerythritol by the glycosyltransferase EMT1 which catalyzes the transfer of GDP-mannose to the C-4 atom of meso-erythritol. This reaction has to be stereospecific, since only mannosyl-D-erythritol is generated. The produced disaccharide is subsequently acylated with fatty acids of various lengths derived from the peroxisomal beta-oxidation by the peroxisomal acyltransferases MAC1 and MAC2 at positions C-2 and C-3, repectively. The existence of MEL derivatives which carry an acetyl group at C-2 implies that at least MAC1 also accepts acetyl-CoA as a donor. The final step of MEL biosynthesis is the acetylation of the fully acylated mannosylerythritol lipids catalyzed by the acetyl-CoA-dependent acetyltransferase MAT1. MAT1 displays a relaxed regioselectivity and is able to transfer acetylgroups to both positions C-4 and C-6 of the mannosyl moiety. The polypeptide is Erythritol-mannosyl-transferase 1 (Mycosarcoma maydis (Corn smut fungus)).